The primary structure comprises 928 residues: Chitin synthase 2 (928 aa).

Disordered stretches follow at residues 1 to 45 (MAYN…EAYA) and 110 to 179 (AYYT…SPAP). Over residues 17–28 (PSAQPQYDSRSP) the composition is skewed to polar residues. A compositionally biased stretch (basic and acidic residues) spans 130-140 (PSHDEPYRPDT). Transmembrane regions (helical) follow at residues 472–492 (SAFG…YVAL), 570–589 (WLNG…YQLW), 613–633 (LFAW…TASL), 644–664 (TVLG…CFIL), 678–698 (MMMV…SIFL), 723–743 (FFGL…ASFL), 753–773 (CFLQ…IYAF), 854–874 (VTAW…IAGF), and 893–913 (VILW…CWFL).

Belongs to the chitin synthase family. Class I subfamily.

The protein resides in the cell membrane. The enzyme catalyses [(1-&gt;4)-N-acetyl-beta-D-glucosaminyl](n) + UDP-N-acetyl-alpha-D-glucosamine = [(1-&gt;4)-N-acetyl-beta-D-glucosaminyl](n+1) + UDP + H(+). Its function is as follows. Polymerizes chitin, a structural polymer of the cell wall and septum, by transferring the sugar moiety of UDP-GlcNAc to the non-reducing end of the growing chitin polymer. CHS2 plays a synergistic role to CHS1 in normal yeast cell reproductive growth, even if this role is less predominant than for CHS1. With CHS3, plays an important role in virulence. This chain is Chitin synthase 2, found in Exophiala dermatitidis (Black yeast-like fungus).